The chain runs to 181 residues: I-Kappa-B like protein C2 (181 aa).

3 ANK repeats span residues D54–S86, D91–I121, and A125–V154.

It belongs to the polydnaviridae I-Kappa-B-like protein family.

In terms of biological role, suppresses the host immune response through NF-kappa-B inactivation. Possesses ankyrin repeat domains required for NF-kappa-B binding but lacks the regulatory regions required for dissociation from NF-kappa-B and degradation. Therefore, prevents host NF-kappa-B release and subsequent activation. In Microplitis demolitor (Parasitoid wasp), this protein is I-Kappa-B like protein C2 (C2).